The following is a 712-amino-acid chain: Interleukin-1 receptor-associated kinase 1 (712 aa).

Residues 27–106 (MCRFYKVMDA…DIITAWHPPA (80 aa)) enclose the Death domain. Phosphothreonine; by PKC/PRKCI is present on Thr-66. The interval 105–187 (PAPLPSPGTT…STKPGPESSV (83 aa)) is disordered. A proST region region spans residues 110-211 (SPGTTAPRPS…LCEISRGTHN (102 aa)). The span at 115–133 (APRPSSIPAPAEAEAWSPR) shows a compositional bias: low complexity. The residue at position 131 (Ser-131) is a Phosphoserine. Lys-134 participates in a covalent cross-link: Glycyl lysine isopeptide (Lys-Gly) (interchain with G-Cter in ubiquitin). The span at 137–154 (SSASTFLSPAFPGSQTHS) shows a compositional bias: polar residues. A Glycyl lysine isopeptide (Lys-Gly) (interchain with G-Cter in ubiquitin) cross-link involves residue Lys-180. Thr-209 carries the post-translational modification Phosphothreonine; by IRAK4. The region spanning 212–521 (FSEELKIGEG…TQVYERLEKL (310 aa)) is the Protein kinase domain. ATP is bound by residues 218-226 (IGEGGFGCV) and Lys-239. Catalysis depends on Asp-340, which acts as the Proton acceptor. Residues 342 to 345 (KSSN) and Asp-358 each bind ATP. 2 positions are modified to phosphoserine: Ser-371 and Ser-375. A Phosphothreonine modification is found at Thr-387. 3 disordered regions span residues 532-591 (SEAA…SDES), 613-660 (APLR…PPQI), and 690-712 (SSLPGLGLEQDRQGPEESDEFQS). Over residues 543–553 (QENSYVSSTGR) the composition is skewed to polar residues. The residue at position 556 (Ser-556) is a Phosphoserine. Low complexity-rich tracts occupy residues 562 to 575 (QPLAAPSGASAQAA) and 643 to 658 (EGLALGSSASSSSEPP).

The protein belongs to the protein kinase superfamily. TKL Ser/Thr protein kinase family. Pelle subfamily. Homodimer. Forms a complex with TRAF6, PELI1, IRAK4 and MYD88. Direct binding of SMAD6 to PELI1 prevents complex formation and hence negatively regulates IL1R-TLR signaling and eventually NF-kappa-B-mediated gene expression. The TRAF6-PELI1-IRAK4-MYD88 complex recruits MAP3K7/TAK1, TAB1 and TAB2 to mediate NF-kappa-B activation. Interaction with MYD88 recruits IRAK1 to the stimulated receptor complex. Interacts with TOLLIP; this interaction occurs in the cytosol prior to receptor activation. Interacts with IL1RL1. Interacts with PELI1 and TRAF6. Interacts (when polyubiquitinated) with IKBKG/NEMO. Interacts with RSAD2/viperin. Interacts with IRAK1BP1. Interacts with PELI2. Interacts with ZC3H12A; this interaction increases the interaction between ZC3H12A and IKBKB/IKKB. Interacts with IRAK4. Interacts with PELI3. Interacts with INAVA; the interaction takes place upon PRR stimulation. Interacts (via C-terminus) with NFATC4 (via N-terminus). As to quaternary structure, (Microbial infection) Interacts with mumps virus protein SH; this interaction inhibits downstream NF-kappa-B pathway activation. In terms of assembly, (Microbial infection) Interacts with alphaviruses SINV, CHIKV, RRV, VEEV and EEEV capsid proteins; the interactions lead to inhibition of IRAK1-dependent signaling. The cofactor is Mg(2+). In terms of processing, following recruitment on the activated receptor complex, phosphorylated on Thr-209, probably by IRAK4, resulting in a conformational change of the kinase domain, allowing further phosphorylations to take place. Thr-387 phosphorylation in the activation loop is required to achieve full enzymatic activity. Post-translationally, polyubiquitinated by TRAF6 after cell stimulation with IL-1-beta by PELI1, PELI2 and PELI3. Polyubiquitination occurs with polyubiquitin chains linked through 'Lys-63'. Ubiquitination promotes interaction with NEMO/IKBKG. Also sumoylated; leading to nuclear translocation. Isoform 1 and isoform 2 are ubiquitously expressed in all tissues examined, with isoform 1 being more strongly expressed than isoform 2.

It is found in the cytoplasm. The protein localises to the nucleus. It localises to the lipid droplet. It carries out the reaction L-seryl-[protein] + ATP = O-phospho-L-seryl-[protein] + ADP + H(+). The catalysed reaction is L-threonyl-[protein] + ATP = O-phospho-L-threonyl-[protein] + ADP + H(+). Serine/threonine-protein kinase that plays a critical role in initiating innate immune response against foreign pathogens. Involved in Toll-like receptor (TLR) and IL-1R signaling pathways. Is rapidly recruited by MYD88 to the receptor-signaling complex upon TLR activation. Association with MYD88 leads to IRAK1 phosphorylation by IRAK4 and subsequent autophosphorylation and kinase activation. Phosphorylates E3 ubiquitin ligases Pellino proteins (PELI1, PELI2 and PELI3) to promote pellino-mediated polyubiquitination of IRAK1. Then, the ubiquitin-binding domain of IKBKG/NEMO binds to polyubiquitinated IRAK1 bringing together the IRAK1-MAP3K7/TAK1-TRAF6 complex and the NEMO-IKKA-IKKB complex. In turn, MAP3K7/TAK1 activates IKKs (CHUK/IKKA and IKBKB/IKKB) leading to NF-kappa-B nuclear translocation and activation. Alternatively, phosphorylates TIRAP to promote its ubiquitination and subsequent degradation. Phosphorylates the interferon regulatory factor 7 (IRF7) to induce its activation and translocation to the nucleus, resulting in transcriptional activation of type I IFN genes, which drive the cell in an antiviral state. When sumoylated, translocates to the nucleus and phosphorylates STAT3. In Homo sapiens (Human), this protein is Interleukin-1 receptor-associated kinase 1.